An 87-amino-acid chain; its full sequence is Small ribosomal subunit protein uS15 (87 aa).

Over residues 1–19 (MDKAKKQELMAKHARHEGD) the composition is skewed to basic and acidic residues. Residues 1–23 (MDKAKKQELMAKHARHEGDTGSP) are disordered.

It belongs to the universal ribosomal protein uS15 family. As to quaternary structure, part of the 30S ribosomal subunit. Forms a bridge to the 50S subunit in the 70S ribosome, contacting the 23S rRNA.

One of the primary rRNA binding proteins, it binds directly to 16S rRNA where it helps nucleate assembly of the platform of the 30S subunit by binding and bridging several RNA helices of the 16S rRNA. Functionally, forms an intersubunit bridge (bridge B4) with the 23S rRNA of the 50S subunit in the ribosome. This chain is Small ribosomal subunit protein uS15, found in Clostridium botulinum (strain Loch Maree / Type A3).